The sequence spans 298 residues: Glutamyl-Q tRNA(Asp) synthetase (298 aa).

L-glutamate is bound by residues 12–16 and Glu48; that span reads RFAPT. The 'HIGH' region motif lies at 15 to 25; it reads PTPSGYLHFGS. The Zn(2+) site is built by Cys104, Cys106, Tyr118, and Cys122. The L-glutamate site is built by Tyr175 and Arg193. The short motif at 231 to 235 is the 'KMSKS' region element; the sequence is KLGKS. Lys234 contributes to the ATP binding site.

The protein belongs to the class-I aminoacyl-tRNA synthetase family. GluQ subfamily. The cofactor is Zn(2+).

In terms of biological role, catalyzes the tRNA-independent activation of glutamate in presence of ATP and the subsequent transfer of glutamate onto a tRNA(Asp). Glutamate is transferred on the 2-amino-5-(4,5-dihydroxy-2-cyclopenten-1-yl) moiety of the queuosine in the wobble position of the QUC anticodon. This Pseudomonas fluorescens (strain ATCC BAA-477 / NRRL B-23932 / Pf-5) protein is Glutamyl-Q tRNA(Asp) synthetase.